We begin with the raw amino-acid sequence, 367 residues long: Probable peptidoglycan glycosyltransferase FtsW (367 aa).

The next 9 membrane-spanning stretches (helical) occupy residues 32-52 (LIFI…PMKF), 57-77 (AFWG…PGIG), 87-107 (IPIG…MIVF), 119-139 (IHGL…CFLL), 149-169 (MVVV…FALF), 171-191 (LLFL…PWRM), 251-271 (VVGE…FVLL), 296-316 (GVVV…FGVF), and 323-343 (LPFI…FGLL).

Belongs to the SEDS family. FtsW subfamily.

Its subcellular location is the cell inner membrane. The enzyme catalyses [GlcNAc-(1-&gt;4)-Mur2Ac(oyl-L-Ala-gamma-D-Glu-L-Lys-D-Ala-D-Ala)](n)-di-trans,octa-cis-undecaprenyl diphosphate + beta-D-GlcNAc-(1-&gt;4)-Mur2Ac(oyl-L-Ala-gamma-D-Glu-L-Lys-D-Ala-D-Ala)-di-trans,octa-cis-undecaprenyl diphosphate = [GlcNAc-(1-&gt;4)-Mur2Ac(oyl-L-Ala-gamma-D-Glu-L-Lys-D-Ala-D-Ala)](n+1)-di-trans,octa-cis-undecaprenyl diphosphate + di-trans,octa-cis-undecaprenyl diphosphate + H(+). Its pathway is cell wall biogenesis; peptidoglycan biosynthesis. In terms of biological role, peptidoglycan polymerase that is essential for cell division. The protein is Probable peptidoglycan glycosyltransferase FtsW of Taylorella equigenitalis (strain MCE9).